The chain runs to 184 residues: uncharacterized protein (184 aa).

This is an uncharacterized protein from Archaeoglobus fulgidus (strain ATCC 49558 / DSM 4304 / JCM 9628 / NBRC 100126 / VC-16).